A 233-amino-acid chain; its full sequence is MNKILLQCDNLCKRYQEGSVQTDVLHNVSFSVGEGEMMAIVGSSGSGKSTLLHLLGGLDTPTSGDVIFNGQPMSKLSSAAKAELRNQKLGFIYQFHHLLPDFTALENVAMPLLIGKKKPAEINSCALEMLKAVGLEHRANHRPSELSGGERQRVAIARALVNNPRLVLADEPTGNLDARNADSIFQLLGELNRLQGTAFLVVTHDLQLAKRMSRQLEMRDGRLTAELSLMGAE.

The ABC transporter domain maps to 6–233 (LQCDNLCKRY…TAELSLMGAE (228 aa)). 42-49 (GSSGSGKS) contributes to the ATP binding site.

It belongs to the ABC transporter superfamily. Lipoprotein translocase (TC 3.A.1.125) family. In terms of assembly, the complex is composed of two ATP-binding proteins (LolD) and two transmembrane proteins (LolC and LolE).

The protein resides in the cell inner membrane. Part of the ABC transporter complex LolCDE involved in the translocation of mature outer membrane-directed lipoproteins, from the inner membrane to the periplasmic chaperone, LolA. Responsible for the formation of the LolA-lipoprotein complex in an ATP-dependent manner. This is Lipoprotein-releasing system ATP-binding protein LolD from Shigella boydii serotype 4 (strain Sb227).